Consider the following 87-residue polypeptide: U3-theraphotoxin-Cg1b (87 aa).

An N-terminal signal peptide occupies residues 1-23 (MRTLTLIAIVTCAALVIFHAAAA). A propeptide spanning residues 24-48 (EELEAQDVIQPEDIFTGVATLEEDR) is cleaved from the precursor. 3 disulfide bridges follow: Cys-52–Cys-65, Cys-56–Cys-79, and Cys-73–Cys-84.

This sequence belongs to the neurotoxin 12 (Hwtx-2) family. 03 (juruin) subfamily. Expressed by the venom gland.

It localises to the secreted. Functionally, probable ion channel inhibitor. The protein is U3-theraphotoxin-Cg1b of Chilobrachys guangxiensis (Chinese earth tiger tarantula).